We begin with the raw amino-acid sequence, 369 residues long: Leucine carboxyl methyltransferase 1 (369 aa).

S-adenosyl-L-methionine-binding positions include Arg84, Gly108, Asp132, 187 to 188 (DL), and Glu215.

Belongs to the methyltransferase superfamily. LCMT family.

It catalyses the reaction [phosphatase 2A protein]-C-terminal L-leucine + S-adenosyl-L-methionine = [phosphatase 2A protein]-C-terminal L-leucine methyl ester + S-adenosyl-L-homocysteine. Methylates the carboxyl group of the C-terminal leucine residue of protein phosphatase 2A catalytic subunits to form alpha-leucine ester residues. This chain is Leucine carboxyl methyltransferase 1 (PPM1), found in Debaryomyces hansenii (strain ATCC 36239 / CBS 767 / BCRC 21394 / JCM 1990 / NBRC 0083 / IGC 2968) (Yeast).